We begin with the raw amino-acid sequence, 268 residues long: Tryptophan synthase alpha chain (268 aa).

Residues E49 and D60 each act as proton acceptor in the active site.

It belongs to the TrpA family. Tetramer of two alpha and two beta chains.

It catalyses the reaction (1S,2R)-1-C-(indol-3-yl)glycerol 3-phosphate + L-serine = D-glyceraldehyde 3-phosphate + L-tryptophan + H2O. Its pathway is amino-acid biosynthesis; L-tryptophan biosynthesis; L-tryptophan from chorismate: step 5/5. In terms of biological role, the alpha subunit is responsible for the aldol cleavage of indoleglycerol phosphate to indole and glyceraldehyde 3-phosphate. The polypeptide is Tryptophan synthase alpha chain (Shigella dysenteriae serotype 1 (strain Sd197)).